The primary structure comprises 303 residues: Probable porphobilinogen deaminase (303 aa).

C240 carries the post-translational modification S-(dipyrrolylmethanemethyl)cysteine.

This sequence belongs to the HMBS family. The cofactor is dipyrromethane.

The catalysed reaction is 4 porphobilinogen + H2O = hydroxymethylbilane + 4 NH4(+). The protein operates within porphyrin-containing compound metabolism; protoporphyrin-IX biosynthesis; coproporphyrinogen-III from 5-aminolevulinate: step 2/4. Its function is as follows. Tetrapolymerization of the monopyrrole PBG into the hydroxymethylbilane pre-uroporphyrinogen in several discrete steps. The polypeptide is Probable porphobilinogen deaminase (Hyperthermus butylicus (strain DSM 5456 / JCM 9403 / PLM1-5)).